The sequence spans 244 residues: Dihydropteridine reductase (244 aa).

A2 is modified (N-acetylalanine). 14–38 (LVYGGRGALGSRCVQAFRARNWWVA) serves as a coordination point for NADP(+). 4 positions are modified to N6-succinyllysine: K73, K79, K96, and K102. Y150 functions as the Proton acceptor in the catalytic mechanism.

Belongs to the short-chain dehydrogenases/reductases (SDR) family. In terms of assembly, homodimer.

The catalysed reaction is 5,6,7,8-tetrahydropteridine + NAD(+) = 6,7-dihydropteridine + NADH + H(+). It catalyses the reaction 5,6,7,8-tetrahydropteridine + NADP(+) = 6,7-dihydropteridine + NADPH + H(+). Functionally, catalyzes the conversion of quinonoid dihydrobiopterin into tetrahydrobiopterin. This is Dihydropteridine reductase (QDPR) from Homo sapiens (Human).